The sequence spans 482 residues: Lipoamide acyltransferase component of branched-chain alpha-keto acid dehydrogenase complex, mitochondrial (482 aa).

Residues 1–61 (MAAALVLRTW…QWLKTTAALQ (61 aa)) constitute a mitochondrion transit peptide. In terms of domain architecture, Lipoyl-binding spans 64–139 (IVQFKLSDIG…YVGKPLVDIE (76 aa)). Lysine 105 carries the N6-lipoyllysine modification. Lysine 133 carries the N6-succinyllysine modification. The tract at residues 145–160 (DSEEDVVETPAVSHDE) is critical for association with PPM1K. Residues 146 to 171 (SEEDVVETPAVSHDEHTHQEIKGQKT) form a disordered region. Basic and acidic residues predominate over residues 157–168 (SHDEHTHQEIKG). Residues 172 to 209 (LATPAVRRLAMENNIKLSEVIGSGKDGRILKEDILNYL) enclose the Peripheral subunit-binding (PSBD) domain. Lysine 196 carries the post-translational modification N6-acetyllysine; alternate. An N6-succinyllysine; alternate modification is found at lysine 196. The residue at position 202 (lysine 202) is an N6-acetyllysine. Positions 218–230 (PPSPKAEIMPPPP) are enriched in pro residues. The segment at 218–238 (PPSPKAEIMPPPPKPKDRTIP) is disordered. Residue serine 220 is modified to Phosphoserine. N6-acetyllysine occurs at positions 243 and 250. Lysine 261 carries the N6-succinyllysine modification. The residue at position 289 (lysine 289) is an N6-acetyllysine; alternate. Residue lysine 289 is modified to N6-succinyllysine; alternate. Arginine 291 serves as a coordination point for CoA. An N6-acetyllysine mark is found at lysine 295 and lysine 304. Positions 306, 349, 378, 399, 400, 403, 424, and 426 each coordinate CoA. N6-acetyllysine is present on lysine 435. Position 440 is an N6-acetyllysine; alternate (lysine 440). Lysine 440 carries the N6-succinyllysine; alternate modification. Catalysis depends on residues histidine 452 and aspartate 456.

This sequence belongs to the 2-oxoacid dehydrogenase family. In terms of assembly, forms a 24-polypeptide structural core with octahedral symmetry that represents the E2 component of the branched-chain alpha-ketoacid dehydrogenase (BCKDH) complex. The BCKDH complex is composed of three major building blocks E1, E2 and E3. It is organized around E2, a 24-meric cubic core composed of DBT, to which are associated 6 to 12 copies of E1, and approximately 6 copies of the dehydrogenase E3, a DLD dimer. Interacts with PPM1K with a 24:1 stoichiometry; the N-terminal region (residues 49-61) of PPM1K and C-terminal linker of the lipoyl domain of DBT/E2 (residues 145-160) are critical for this interaction whereas the lipoyl prosthetic group is dispensable. This interaction requires colocalization in mitochondria. PPM1K competes with BCKDK for binding to DBT; this interaction is modulated by branched-chain alpha-keto acids (BCKAs). At steady state, BCKDH holoenzyme preferentially binds BCKDK and BCKDHA is phosphorylated. In response to high levels of BCKAs, BCKDK is replaced by PPM1K leading to BCKDHA dephosphorylation. Requires (R)-lipoate as cofactor. In terms of tissue distribution, expressed in kidney (at protein level).

Its subcellular location is the mitochondrion matrix. It catalyses the reaction N(6)-[(R)-dihydrolipoyl]-L-lysyl-[protein] + 2-methylpropanoyl-CoA = N(6)-[(R)-S(8)-2-methylpropanoyldihydrolipoyl]-L-lysyl-[protein] + CoA. In terms of biological role, the branched-chain alpha-keto dehydrogenase complex catalyzes the overall conversion of alpha-keto acids to acyl-CoA and CO(2). It contains multiple copies of three enzymatic components: branched-chain alpha-keto acid decarboxylase (E1), lipoamide acyltransferase (E2) and lipoamide dehydrogenase (E3). Within this complex, the catalytic function of this enzyme is to accept, and to transfer to coenzyme A, acyl groups that are generated by the branched-chain alpha-keto acid decarboxylase component. The protein is Lipoamide acyltransferase component of branched-chain alpha-keto acid dehydrogenase complex, mitochondrial (DBT) of Bos taurus (Bovine).